A 469-amino-acid chain; its full sequence is Serine/threonine-protein kinase orb6 (469 aa).

One can recognise a Protein kinase domain in the interval 93–392 (FSTIKVIGKG…AIEIMQHPFF (300 aa)). ATP contacts are provided by residues 99-107 (IGKGAFGEV) and K122. The active-site Proton acceptor is D216. The region spanning 393–467 (TGIDWDHIRE…KKFNYLTMKG (75 aa)) is the AGC-kinase C-terminal domain.

It belongs to the protein kinase superfamily. Ser/Thr protein kinase family. Interacts with mob2.

The enzyme catalyses L-seryl-[protein] + ATP = O-phospho-L-seryl-[protein] + ADP + H(+). The catalysed reaction is L-threonyl-[protein] + ATP = O-phospho-L-threonyl-[protein] + ADP + H(+). Interacts with pak1/shk1 and coordinates cell morphogenesis with the cell cycle. It is essential for maintenance of cell polarity and is involved in mitotic control. The polypeptide is Serine/threonine-protein kinase orb6 (orb6) (Schizosaccharomyces pombe (strain 972 / ATCC 24843) (Fission yeast)).